A 343-amino-acid chain; its full sequence is Putative trace amine-associated receptor 3 (343 aa).

Over 1–35 the chain is Extracellular; the sequence is MDLTYIPEDLSSCPKFVNKILSSHQPLFSCPGDNV. The chain crosses the membrane as a helical span at residues 36 to 56; the sequence is FGYDWSHDYPLFGNLVIMVSI. Residues 57 to 68 lie on the Cytoplasmic side of the membrane; it reads SHFKQLHSPTNF. The helical transmembrane segment at 69–89 threads the bilayer; that stretch reads LILSMATTDFLLGFVIMPYSI. The Extracellular portion of the chain corresponds to 90 to 150; sequence MRSVESCWYF…TKMTNSTIKQ (61 aa). A disulfide bridge links Cys-104 with Cys-189. An N-linked (GlcNAc...) asparagine glycan is attached at Asn-145. Residues 151 to 168 traverse the membrane as a helical segment; sequence LLAFCWSVPALFSFGLVL. Residues 169 to 172 are Cytoplasmic-facing; sequence SEAD. Positions 173–186 are extracellular Loop 2 (ECL2); it reads VSGMQSYKILVACF. Residues 173–193 form a helical membrane-spanning segment; it reads VSGMQSYKILVACFNFCALTF. Residues 194–198 are Extracellular-facing; sequence NKFWG. A helical transmembrane segment spans residues 199 to 223; that stretch reads TILFTTCFFTPGSIMVGIYGKIFIV. The Cytoplasmic segment spans residues 224-257; that stretch reads SKQHARVISHVPENTKGAVKKHLSKKKDRKAAKT. The chain crosses the membrane as a helical span at residues 258–278; sequence LGIVMGVFLACWLPCFLAVLI. At 279-287 the chain is on the extracellular side; it reads DPYLDYSTP. The helical transmembrane segment at 288 to 308 threads the bilayer; sequence ILILDLLVWLRYFNSTCNPLI. At 309-343 the chain is on the cytoplasmic side; the sequence is HGFFNPWFQKAFKYIVSGKIFSSHSETANLFPEAH.

This sequence belongs to the G-protein coupled receptor 1 family. As to expression, not expressed in the pons, thalamus, globus pallidus, caudate, putamen or cerebellum.

The protein resides in the cell membrane. Putative olfactory receptor activated by several primary trace amines. The chain is Putative trace amine-associated receptor 3 from Homo sapiens (Human).